The sequence spans 378 residues: Deoxyguanosinetriphosphate triphosphohydrolase-like protein (378 aa).

The 137-residue stretch at arginine 62–asparagine 198 folds into the HD domain.

This sequence belongs to the dGTPase family. Type 2 subfamily.

This Paracoccus denitrificans (strain Pd 1222) protein is Deoxyguanosinetriphosphate triphosphohydrolase-like protein.